A 122-amino-acid chain; its full sequence is Large ribosomal subunit protein uL14 (122 aa).

The protein belongs to the universal ribosomal protein uL14 family. Part of the 50S ribosomal subunit. Forms a cluster with proteins L3 and L19. In the 70S ribosome, L14 and L19 interact and together make contacts with the 16S rRNA in bridges B5 and B8.

Binds to 23S rRNA. Forms part of two intersubunit bridges in the 70S ribosome. This is Large ribosomal subunit protein uL14 from Halalkalibacterium halodurans (strain ATCC BAA-125 / DSM 18197 / FERM 7344 / JCM 9153 / C-125) (Bacillus halodurans).